Consider the following 212-residue polypeptide: Pyridoxine/pyridoxamine 5'-phosphate oxidase (212 aa).

Residues 57 to 62 (RMVLLK), 72 to 73 (YT), Arg78, Lys79, and Gln101 contribute to the FMN site. Lys62 lines the substrate pocket. 3 residues coordinate substrate: Tyr119, Arg123, and Ser127. FMN-binding positions include 136 to 137 (QS) and Trp181. 187-189 (RLH) serves as a coordination point for substrate. Position 191 (Arg191) interacts with FMN.

Belongs to the pyridoxamine 5'-phosphate oxidase family. Homodimer. FMN is required as a cofactor.

The catalysed reaction is pyridoxamine 5'-phosphate + O2 + H2O = pyridoxal 5'-phosphate + H2O2 + NH4(+). It catalyses the reaction pyridoxine 5'-phosphate + O2 = pyridoxal 5'-phosphate + H2O2. It participates in cofactor metabolism; pyridoxal 5'-phosphate salvage; pyridoxal 5'-phosphate from pyridoxamine 5'-phosphate: step 1/1. The protein operates within cofactor metabolism; pyridoxal 5'-phosphate salvage; pyridoxal 5'-phosphate from pyridoxine 5'-phosphate: step 1/1. In terms of biological role, catalyzes the oxidation of either pyridoxine 5'-phosphate (PNP) or pyridoxamine 5'-phosphate (PMP) into pyridoxal 5'-phosphate (PLP). The sequence is that of Pyridoxine/pyridoxamine 5'-phosphate oxidase from Erythrobacter litoralis (strain HTCC2594).